We begin with the raw amino-acid sequence, 729 residues long: Monosaccharide-sensing protein 3 (729 aa).

The next 6 membrane-spanning stretches (helical) occupy residues 5 to 25 (VLVALAAAIGNMLQGWDNATI), 46 to 66 (GLIVAMSLIGATLITTFSGPV), 81 to 101 (VLYFLSSIVMFWSPNVYVLLF), 104 to 124 (LLDGFGIGLAVTLVPIYISET), 135 to 155 (TFPQFCGSGGMFLSYCLVFGM), and 165 to 185 (LMLGVLSIPSIAYFVLAAFFL). The tract at residues 337 to 372 (QESQWDPERNNEDSSDQDENLNSPLLSPQTTEPDDY) is disordered. The span at 356–367 (NLNSPLLSPQTT) shows a compositional bias: polar residues. The residue at position 446 (Ser446) is a Phosphoserine. 6 helical membrane passes run 511 to 531 (ALMVGVGLQILQQFAGINGVM), 557 to 577 (ASLLISALTTLLMLPCILVSM), 581 to 601 (MLSTIPILILSLVTLVIGSLV), 610 to 630 (LISTASVTVYLSCFVMGFGAI), 650 to 670 (ICALTFWICDIIVTYTLPVML), and 673 to 693 (IGIAGVFGIYAIVCAVAWVFV).

Belongs to the major facilitator superfamily. Sugar transporter (TC 2.A.1.1) family. In terms of tissue distribution, weakly expressed.

It is found in the vacuole membrane. The catalysed reaction is D-glucose(out) + H(+)(in) = D-glucose(in) + H(+)(out). It catalyses the reaction sucrose(out) + H(+)(in) = sucrose(in) + H(+)(out). In terms of biological role, sugar proton-coupled antiporter which contributes to vacuolar sugar import (e.g. monosaccharides including glucose,sucrose and fructose), particularly during stress responses (e.g. in response to cold). The chain is Monosaccharide-sensing protein 3 from Arabidopsis thaliana (Mouse-ear cress).